We begin with the raw amino-acid sequence, 793 residues long: Putative glutamate--cysteine ligase 2-3 (793 aa).

Residues Met1–Asp407 are carboxylate-amine ligase. The tract at residues Thr367 to Arg390 is disordered. The peptidase M20 stretch occupies residues Met408–Gly793.

This sequence in the C-terminal section; belongs to the glutamate--cysteine ligase type 2 family. YbdK subfamily.

The enzyme catalyses L-cysteine + L-glutamate + ATP = gamma-L-glutamyl-L-cysteine + ADP + phosphate + H(+). Its function is as follows. ATP-dependent carboxylate-amine ligase which exhibits weak glutamate--cysteine ligase activity. The polypeptide is Putative glutamate--cysteine ligase 2-3 (Rhodococcus jostii (strain RHA1)).